Reading from the N-terminus, the 122-residue chain is MIQQESRLKVADNTGAKEILTIRVLGGSGRRYAGIGDTIVATVKDAIPGGNVKKGDVVKAVVVRTRKQSRRPDGSYIKFDENAAVILKTDGEPRGTRIFGPVGRELRDKKFMKIVSLAPEVI.

The protein belongs to the universal ribosomal protein uL14 family. As to quaternary structure, part of the 50S ribosomal subunit. Forms a cluster with proteins L3 and L19. In the 70S ribosome, L14 and L19 interact and together make contacts with the 16S rRNA in bridges B5 and B8.

Functionally, binds to 23S rRNA. Forms part of two intersubunit bridges in the 70S ribosome. This is Large ribosomal subunit protein uL14 from Micrococcus luteus (strain ATCC 4698 / DSM 20030 / JCM 1464 / CCM 169 / CCUG 5858 / IAM 1056 / NBRC 3333 / NCIMB 9278 / NCTC 2665 / VKM Ac-2230) (Micrococcus lysodeikticus).